A 232-amino-acid chain; its full sequence is Ribonuclease 3 (232 aa).

Residues 6–133 (FNDIENRLGV…VIAAVYLDKG (128 aa)) form the RNase III domain. Mg(2+) is bound at residue glutamate 46. Residue aspartate 50 is part of the active site. 2 residues coordinate Mg(2+): aspartate 119 and glutamate 122. The active site involves glutamate 122. The DRBM domain maps to 160–229 (DFKTKLQELL…AKEALKRLEK (70 aa)).

Belongs to the ribonuclease III family. As to quaternary structure, homodimer. Mg(2+) serves as cofactor.

The protein resides in the cytoplasm. It catalyses the reaction Endonucleolytic cleavage to 5'-phosphomonoester.. Digests double-stranded RNA. Involved in the processing of primary rRNA transcript to yield the immediate precursors to the large and small rRNAs (23S and 16S). Processes some mRNAs, and tRNAs when they are encoded in the rRNA operon. Processes pre-crRNA and tracrRNA of type II CRISPR loci if present in the organism. In Clostridium botulinum (strain Eklund 17B / Type B), this protein is Ribonuclease 3.